The sequence spans 529 residues: Putative E3 ubiquitin-protein ligase ARI4 (529 aa).

The segment covering 1–22 has biased composition (acidic residues); that stretch reads MDDEYMSLEEEEDNCYPSEFDD. Positions 1 to 23 are disordered; it reads MDDEYMSLEEEEDNCYPSEFDDH. Residues 115–327 are TRIAD supradomain; that stretch reads KTMKCDICME…IAGHSCGRYK (213 aa). Cys119, Cys122, Cys137, His139, Cys142, Cys145, Cys164, Cys169, Cys206, Cys212, Cys230, Cys232, Cys237, Cys240, His245, Cys250, Cys277, and Cys280 together coordinate Zn(2+). The RING-type 1 zinc finger occupies 119–169; it reads CDICMEEDLSKYAMTRMECGHRFCNDCWKEHFTVRINEGEGKRIRCMAYKC. Residues 186–250 form an IBR-type zinc finger; that stretch reads EKFDRFLIES…LSESHSPCSC (65 aa). An RING-type 2; atypical zinc finger spans residues 277 to 305; sequence CPKCSKPIQKRDGCNHMTCKCGQHFCWLC. The active site involves Cys290. Zn(2+) is bound by residues Cys295, Cys297, Cys302, Cys305, His313, and Cys323.

Belongs to the RBR family. Ariadne subfamily. Zn(2+) serves as cofactor.

It catalyses the reaction [E2 ubiquitin-conjugating enzyme]-S-ubiquitinyl-L-cysteine + [acceptor protein]-L-lysine = [E2 ubiquitin-conjugating enzyme]-L-cysteine + [acceptor protein]-N(6)-ubiquitinyl-L-lysine.. Its pathway is protein modification; protein ubiquitination. In terms of biological role, might act as an E3 ubiquitin-protein ligase, or as part of E3 complex, which accepts ubiquitin from specific E2 ubiquitin-conjugating enzymes and then transfers it to substrates. This is Putative E3 ubiquitin-protein ligase ARI4 (ARI4) from Arabidopsis thaliana (Mouse-ear cress).